Consider the following 95-residue polypeptide: MALSSDDVVKIARLARLRVSEAERGAVQGQLNGIFDLIEAMRAVDTAGVEPMAHPQDAALRLRADAVTETDRRSAYQAVAPQVENGLYLVPKVIE.

It belongs to the GatC family. Heterotrimer of A, B and C subunits.

It catalyses the reaction L-glutamyl-tRNA(Gln) + L-glutamine + ATP + H2O = L-glutaminyl-tRNA(Gln) + L-glutamate + ADP + phosphate + H(+). The enzyme catalyses L-aspartyl-tRNA(Asn) + L-glutamine + ATP + H2O = L-asparaginyl-tRNA(Asn) + L-glutamate + ADP + phosphate + 2 H(+). In terms of biological role, allows the formation of correctly charged Asn-tRNA(Asn) or Gln-tRNA(Gln) through the transamidation of misacylated Asp-tRNA(Asn) or Glu-tRNA(Gln) in organisms which lack either or both of asparaginyl-tRNA or glutaminyl-tRNA synthetases. The reaction takes place in the presence of glutamine and ATP through an activated phospho-Asp-tRNA(Asn) or phospho-Glu-tRNA(Gln). The chain is Aspartyl/glutamyl-tRNA(Asn/Gln) amidotransferase subunit C from Laribacter hongkongensis (strain HLHK9).